A 196-amino-acid chain; its full sequence is Ribosomal RNA large subunit methyltransferase E (196 aa).

Residues Gly-50, Trp-52, Asp-70, Asp-87, and Asp-112 each contribute to the S-adenosyl-L-methionine site. Lys-152 serves as the catalytic Proton acceptor.

This sequence belongs to the class I-like SAM-binding methyltransferase superfamily. RNA methyltransferase RlmE family.

The protein resides in the cytoplasm. The catalysed reaction is uridine(2552) in 23S rRNA + S-adenosyl-L-methionine = 2'-O-methyluridine(2552) in 23S rRNA + S-adenosyl-L-homocysteine + H(+). In terms of biological role, specifically methylates the uridine in position 2552 of 23S rRNA at the 2'-O position of the ribose in the fully assembled 50S ribosomal subunit. In Bdellovibrio bacteriovorus (strain ATCC 15356 / DSM 50701 / NCIMB 9529 / HD100), this protein is Ribosomal RNA large subunit methyltransferase E.